A 288-amino-acid polypeptide reads, in one-letter code: Light-independent protochlorophyllide reductase iron-sulfur ATP-binding protein (288 aa).

ATP-binding positions include Gly12–Thr17 and Lys41. Ser16 contacts Mg(2+). The [4Fe-4S] cluster site is built by Cys97 and Cys131. Asn182–Arg183 is an ATP binding site.

The protein belongs to the NifH/BchL/ChlL family. In terms of assembly, homodimer. Protochlorophyllide reductase is composed of three subunits; ChlL, ChlN and ChlB. [4Fe-4S] cluster is required as a cofactor.

The enzyme catalyses chlorophyllide a + oxidized 2[4Fe-4S]-[ferredoxin] + 2 ADP + 2 phosphate = protochlorophyllide a + reduced 2[4Fe-4S]-[ferredoxin] + 2 ATP + 2 H2O. It functions in the pathway porphyrin-containing compound metabolism; chlorophyll biosynthesis (light-independent). In terms of biological role, component of the dark-operative protochlorophyllide reductase (DPOR) that uses Mg-ATP and reduced ferredoxin to reduce ring D of protochlorophyllide (Pchlide) to form chlorophyllide a (Chlide). This reaction is light-independent. The L component serves as a unique electron donor to the NB-component of the complex, and binds Mg-ATP. This chain is Light-independent protochlorophyllide reductase iron-sulfur ATP-binding protein, found in Synechocystis sp. (strain ATCC 27184 / PCC 6803 / Kazusa).